The following is a 92-amino-acid chain: PqqA binding protein (92 aa).

Belongs to the PqqD family. In terms of assembly, monomer. Interacts with PqqE.

Its pathway is cofactor biosynthesis; pyrroloquinoline quinone biosynthesis. In terms of biological role, functions as a PqqA binding protein and presents PqqA to PqqE, in the pyrroloquinoline quinone (PQQ) biosynthetic pathway. In Pseudomonas paraeruginosa (strain DSM 24068 / PA7) (Pseudomonas aeruginosa (strain PA7)), this protein is PqqA binding protein.